The primary structure comprises 126 residues: MAISKEEVLDYIGNLSVLELSELVKAFEEKFGVSAAPTVVAGAVAGGAGGGAAAEEKTDFNVVLVDAGANKINVIKAVREITGLGLKEAKDATEQTPSTLKEGVSKEDAENFKKKLEEAGAKVEIK.

It belongs to the bacterial ribosomal protein bL12 family. In terms of assembly, homodimer. Part of the ribosomal stalk of the 50S ribosomal subunit. Forms a multimeric L10(L12)X complex, where L10 forms an elongated spine to which 2 to 4 L12 dimers bind in a sequential fashion. Binds GTP-bound translation factors.

Forms part of the ribosomal stalk which helps the ribosome interact with GTP-bound translation factors. Is thus essential for accurate translation. This Helicobacter hepaticus (strain ATCC 51449 / 3B1) protein is Large ribosomal subunit protein bL12.